A 121-amino-acid chain; its full sequence is Succinate dehydrogenase assembly factor 3, mitochondrial (121 aa).

The N-terminal 35 residues, 1-35 (MRPSLVRLVRPRRPERKTSPILPPLKLYKALLRAH), are a transit peptide targeting the mitochondrion.

This sequence belongs to the complex I LYR family. SDHAF3 subfamily. In terms of assembly, interacts with the iron-sulfur protein subunit within the SDH catalytic dimer.

The protein resides in the mitochondrion matrix. Plays an essential role in the assembly of succinate dehydrogenase (SDH), an enzyme complex (also referred to as respiratory complex II) that is a component of both the tricarboxylic acid (TCA) cycle and the mitochondrial electron transport chain, and which couples the oxidation of succinate to fumarate with the reduction of ubiquinone (coenzyme Q) to ubiquinol. Promotes maturation of the iron-sulfur protein subunit of the SDH catalytic dimer, protecting it from the deleterious effects of oxidants. May act together with SDHAF1. In Debaryomyces hansenii (strain ATCC 36239 / CBS 767 / BCRC 21394 / JCM 1990 / NBRC 0083 / IGC 2968) (Yeast), this protein is Succinate dehydrogenase assembly factor 3, mitochondrial.